A 178-amino-acid polypeptide reads, in one-letter code: ATP-dependent protease subunit HslV (178 aa).

Threonine 7 is an active-site residue. Na(+) is bound by residues glycine 162, cysteine 165, and threonine 168.

It belongs to the peptidase T1B family. HslV subfamily. As to quaternary structure, a double ring-shaped homohexamer of HslV is capped on each side by a ring-shaped HslU homohexamer. The assembly of the HslU/HslV complex is dependent on binding of ATP.

It localises to the cytoplasm. It carries out the reaction ATP-dependent cleavage of peptide bonds with broad specificity.. With respect to regulation, allosterically activated by HslU binding. Its function is as follows. Protease subunit of a proteasome-like degradation complex believed to be a general protein degrading machinery. The protein is ATP-dependent protease subunit HslV of Burkholderia orbicola (strain AU 1054).